Consider the following 205-residue polypeptide: Isochorismatase domain-containing protein 2 (205 aa).

2 positions are modified to phosphoserine: Ser7 and Ser202.

This sequence belongs to the isochorismatase family. In terms of assembly, interacts with CDKN2A.

It localises to the cytoplasm. It is found in the nucleus. This chain is Isochorismatase domain-containing protein 2 (ISOC2), found in Homo sapiens (Human).